The chain runs to 729 residues: Pentatricopeptide repeat-containing protein At4g04370 (729 aa).

PPR repeat units lie at residues 10 to 44 (STKY…KLLP), 45 to 79 (DTFT…GFSS), 80 to 110 (DFYI…MRER), 111 to 145 (DVVH…GIKP), 178 to 208 (DIAV…MEQR), 209 to 243 (DMVS…GLRP), 244 to 278 (DQQT…GFDV), 279 to 309 (DMHL…IPNK), 310 to 344 (DVVC…GSDL), 345 to 379 (SSEA…GYTL), 380 to 414 (DTPA…DLVS), 415 to 445 (WNAI…TVQQ), 447 to 481 (DSFT…FIRP), 482 to 512 (CSLV…ISWK), 513 to 547 (DVVS…GMEP), 548 to 583 (NHVI…GVEP), and 584 to 618 (NHEH…PSID). The interval 619–694 (VLGIILDACR…LPGWSKIEMN (76 aa)) is type E motif. Residues 695-723 (GKTTTFFMNHTSHSDDTVSLLKLLSREMM) form a type E(+) motif region.

Belongs to the PPR family. PCMP-E subfamily.

In Arabidopsis thaliana (Mouse-ear cress), this protein is Pentatricopeptide repeat-containing protein At4g04370 (PCMP-E99).